The following is a 585-amino-acid chain: Pre-hexon-linking protein IIIa (585 aa).

The segment at 1-24 (MMQDATDPAVRAALQSQPSGLNST) is disordered. Residues 1 to 106 (MMQDATDPAV…ALLQRVARYN (106 aa)) are peripentonal hexon-tethering domain. Residues 14–24 (LQSQPSGLNST) show a composition bias toward polar residues. The binding to hexon-linking protein stretch occupies residues 138-251 (GSMVALNAFL…FTDSGSVSRD (114 aa)). S225 bears the Phosphoserine; by host mark. The residue at position 274 (T274) is a Phosphothreonine; by host. S310, S444, S449, S450, S452, S469, and S473 each carry phosphoserine; by host. The segment at 438–475 (AALRKESFRRPSSLSDLGAAAPRSDASSPFPSLIGSFT) is disordered. Positions 462–475 (DASSPFPSLIGSFT) are enriched in polar residues. Y490 carries the phosphotyrosine; by host modification. Phosphoserine; by host occurs at positions 494 and 515. The tract at residues 528–573 (QEHRDVPGPRPPTRRQRHDRQRGLVWEDDDSADDSSVLDLGGSGNP) is disordered. A propeptide spanning residues 571 to 585 (GNPFAHLRPRLGRMF) is cleaved from the precursor.

The protein belongs to the adenoviridae hexon-linking protein IIIa family. Interacts with hexon proteins; this interaction tethers the peripentonal hexons to hexons situated in the facet. Interacts with the penton protein (via N-terminus). Interacts with packaging protein 3; this interaction is required to promote correct genome packaging. In terms of processing, cleaved near the C-terminus by the viral protease during virion maturation to form the mature protein.

It is found in the virion. Its subcellular location is the host nucleus. Functionally, structural component of the virion that acts as a cement protein on the capsid exterior which mediates the interactions between the hexons, including the peripentonal hexons, and reaches all the way to the penton vertices. Two hexon linking proteins IIIa, one from each facet, stabilize the unique edge interface between a pair of facets. As the virus enters the host cell, hexon linking proteins IIIa are shed concomitant with virion acidification in the endosome. During virus assembly, seems to play a role in the serotype specificity of the packaging of viral DNA via its interaction with packaging protein 3. The sequence is that of Pre-hexon-linking protein IIIa from Human adenovirus C serotype 2 (HAdV-2).